The chain runs to 452 residues: Agmatine coumaroyltransferase (452 aa).

Catalysis depends on proton acceptor residues His-163 and Asp-396.

It belongs to the plant acyltransferase family.

The enzyme catalyses 4-coumaroyl-CoA + agmatine = N-(4-guanidinobutyl)-4-hydroxycinnamamide + CoA + H(+). Functionally, involved in the biosynthesis of hydroxycinnamic acid amides, which play a role in defense against pathogens. Agmatine is the preferred acyl acceptor, lower activity is observed towards putrescine. The preferred acyl donor is p-coumaroyl-CoA, lower activity is seen towards feruloyl-CoA. In Arabidopsis thaliana (Mouse-ear cress), this protein is Agmatine coumaroyltransferase.